Here is a 423-residue protein sequence, read N- to C-terminus: Kynurenine--oxoglutarate transaminase 1 (423 aa).

Gly-36 provides a ligand contact to substrate. Lys-82 bears the N6-succinyllysine mark. Asn-185 contacts substrate. Lys-247 bears the N6-(pyridoxal phosphate)lysine mark. Substrate is bound at residue Arg-398.

Belongs to the class-I pyridoxal-phosphate-dependent aminotransferase family. As to quaternary structure, homodimer. The cofactor is pyridoxal 5'-phosphate. Detected in kidney.

The protein localises to the cytoplasm. Its subcellular location is the cytosol. It localises to the mitochondrion matrix. It carries out the reaction L-kynurenine + 2-oxoglutarate = kynurenate + L-glutamate + H2O. It catalyses the reaction 3-phenylpyruvate + L-glutamine = 2-oxoglutaramate + L-phenylalanine. The catalysed reaction is an S-substituted L-cysteine + H2O = a thiol + pyruvate + NH4(+). It participates in amino-acid degradation; L-kynurenine degradation; kynurenate from L-kynurenine: step 1/2. Its activity is regulated as follows. Inhibited by aminooxyacetate (in vitro). In terms of biological role, catalyzes the irreversible transamination of the L-tryptophan metabolite L-kynurenine to form kynurenic acid (KA), an intermediate in the tryptophan catabolic pathway which is also a broad spectrum antagonist of the three ionotropic excitatory amino acid receptors among others. Metabolizes the cysteine conjugates of certain halogenated alkenes and alkanes to form reactive metabolites. Catalyzes the beta-elimination of S-conjugates and Se-conjugates of L-(seleno)cysteine, resulting in the cleavage of the C-S or C-Se bond. This is Kynurenine--oxoglutarate transaminase 1 from Rattus norvegicus (Rat).